Consider the following 88-residue polypeptide: Small ribosomal subunit protein uS17 (88 aa).

The protein belongs to the universal ribosomal protein uS17 family. Part of the 30S ribosomal subunit.

In terms of biological role, one of the primary rRNA binding proteins, it binds specifically to the 5'-end of 16S ribosomal RNA. The protein is Small ribosomal subunit protein uS17 of Helicobacter hepaticus (strain ATCC 51449 / 3B1).